We begin with the raw amino-acid sequence, 105 residues long: Flagellar transcriptional regulator FlhD (105 aa).

The protein belongs to the FlhD family. Homodimer; disulfide-linked. Forms a heterohexamer composed of two FlhC and four FlhD subunits. Each FlhC binds a FlhD dimer, forming a heterotrimer, and a hexamer assembles by dimerization of two heterotrimers.

The protein localises to the cytoplasm. In terms of biological role, functions in complex with FlhC as a master transcriptional regulator that regulates transcription of several flagellar and non-flagellar operons by binding to their promoter region. Activates expression of class 2 flagellar genes, including fliA, which is a flagellum-specific sigma factor that turns on the class 3 genes. Also regulates genes whose products function in a variety of physiological pathways. This Nitrosomonas eutropha (strain DSM 101675 / C91 / Nm57) protein is Flagellar transcriptional regulator FlhD.